Consider the following 188-residue polypeptide: Gamma-glutamylcyclotransferase (188 aa).

19 to 24 (YFAYGS) contributes to the substrate binding site. Glu-98 acts as the Proton acceptor in catalysis. Tyr-139 is a binding site for substrate. Residue Ser-173 is modified to Phosphoserine.

The protein belongs to the gamma-glutamylcyclotransferase family. Homodimer.

It carries out the reaction an alpha-(gamma-L-glutamyl)-L-amino acid = 5-oxo-L-proline + an L-alpha-amino acid. Its function is as follows. Catalyzes the formation of 5-oxoproline from gamma-glutamyl dipeptides and may play a significant role in glutathione homeostasis. Induces release of cytochrome c from mitochondria with resultant induction of apoptosis. The sequence is that of Gamma-glutamylcyclotransferase from Homo sapiens (Human).